The following is a 259-amino-acid chain: Protein BEAN1 (259 aa).

A helical membrane pass occupies residues 36–56 (VLVASAVIGVVIILSCITIIV). The span at 71–89 (RHRHHRHHHHHHHHRRRRH) shows a compositional bias: basic residues. 2 disordered regions span residues 71-91 (RHRHHRHHHHHHHHRRRRHRE) and 152-259 (VGPG…ERIV). Positions 171–187 (LTDSCPTLDGTSDSGSG) are enriched in polar residues. Positions 221–230 (GAGPPSGLLP) are enriched in low complexity.

Interacts with NEDD4.

The protein resides in the membrane. The polypeptide is Protein BEAN1 (BEAN1) (Homo sapiens (Human)).